Here is a 268-residue protein sequence, read N- to C-terminus: tRNA pseudouridine synthase A (268 aa).

Residue D52 is the Nucleophile of the active site. Residue Y110 participates in substrate binding.

This sequence belongs to the tRNA pseudouridine synthase TruA family. In terms of assembly, homodimer.

It catalyses the reaction uridine(38/39/40) in tRNA = pseudouridine(38/39/40) in tRNA. In terms of biological role, formation of pseudouridine at positions 38, 39 and 40 in the anticodon stem and loop of transfer RNAs. This is tRNA pseudouridine synthase A from Prochlorococcus marinus (strain MIT 9515).